A 341-amino-acid polypeptide reads, in one-letter code: Barley B recombinant-like protein A (341 aa).

The span at 48-62 shows a compositional bias: basic residues; it reads HQHQQHVPHHHHQPH. 2 disordered regions span residues 48 to 95 and 150 to 234; these read HQHQ…MNFA and MQQQ…RKNI. A compositionally biased stretch (low complexity) spans 68 to 77; sequence GANGNANGGA. A compositionally biased stretch (pro residues) spans 78-90; that stretch reads MPPPPATEAPPSM. Positions 190–211 are enriched in basic residues; it reads PKKRQQGRQPKVPRAKKPKKSA.

It belongs to the BBR/BPC family.

It is found in the nucleus. Its function is as follows. Transcriptional regulator that specifically binds to GA-rich elements (GAGA-repeats) present in regulatory sequences of genes involved in developmental processes. The chain is Barley B recombinant-like protein A from Oryza sativa subsp. japonica (Rice).